The primary structure comprises 564 residues: Large neutral amino acids transporter small subunit 3 (564 aa).

The chain crosses the membrane as a helical span at residues 20–40; that stretch reads VVENLFFSAVLLGWASLLIML. Residues Asn-54 and Asn-57 are each glycosylated (N-linked (GlcNAc...) asparagine). The next 5 membrane-spanning stretches (helical) occupy residues 78 to 98, 105 to 124, 131 to 151, 165 to 185, and 191 to 211; these read LGFTIGSFLLSATTLPLGILM, PLRLVGSACFAASCTLMALA, LSPLIFLALSLNGFAGICLTF, STFMALMIGSYASSAITFPGI, and AGVPFTVIMFTWSGLACLIFL. Phosphoserine occurs at positions 262 and 267. Helical transmembrane passes span 303 to 323 and 357 to 377; these read IFLWSLVTMGMTQLRVIFYMG and SIFGVMQLLCLLTCPLIGYIM. N-linked (GlcNAc...) asparagine glycosylation occurs at Asn-396. Ser-398 bears the Phosphoserine mark. Helical transmembrane passes span 424–444, 451–471, 490–510, and 515–535; these read AINAFTLTNILLVGFGIACLI, LLAFVLHTIVRGFFHSACGGL, LISAVFALLQQLLFMAMVGPL, and FWVNLGLLLLSFLGFLLPSYL. Asn-558 is a glycosylation site (N-linked (GlcNAc...) asparagine).

The protein belongs to the SLC43A transporter (TC 2.A.1.44) family. In terms of tissue distribution, expressed in the kidney cortex as well as liver, pancreas, and skeletal muscle. In kidney expressed in the glomerular tuft (at protein level). Expressed in liver, skeletal muscle and pancreas (at protein level).

Its subcellular location is the cell membrane. The protein localises to the apical cell membrane. It is found in the endoplasmic reticulum membrane. It catalyses the reaction D-leucine(in) = D-leucine(out). The catalysed reaction is L-leucine(in) = L-leucine(out). The enzyme catalyses L-isoleucine(in) = L-isoleucine(out). It carries out the reaction L-methionine(in) = L-methionine(out). It catalyses the reaction L-phenylalanine(in) = L-phenylalanine(out). The catalysed reaction is L-valine(in) = L-valine(out). Uniport that mediates the transport of neutral amino acids such as L-leucine, L-isoleucine, L-valine, and L-phenylalanine. The transport activity is sodium ions-independent, electroneutral and mediated by a facilitated diffusion. The polypeptide is Large neutral amino acids transporter small subunit 3 (Mus musculus (Mouse)).